We begin with the raw amino-acid sequence, 82 residues long: Cytochrome b559 subunit alpha (82 aa).

A helical membrane pass occupies residues Val-21 to Trp-35. His-23 contacts heme.

It belongs to the PsbE/PsbF family. As to quaternary structure, heterodimer of an alpha subunit and a beta subunit. PSII is composed of 1 copy each of membrane proteins PsbA, PsbB, PsbC, PsbD, PsbE, PsbF, PsbH, PsbI, PsbJ, PsbK, PsbL, PsbM, PsbT, PsbX, PsbY, PsbZ, Psb30/Ycf12, peripheral proteins PsbO, CyanoQ (PsbQ), PsbU, PsbV and a large number of cofactors. It forms dimeric complexes. The cofactor is heme b.

It is found in the cellular thylakoid membrane. In terms of biological role, this b-type cytochrome is tightly associated with the reaction center of photosystem II (PSII). PSII is a light-driven water:plastoquinone oxidoreductase that uses light energy to abstract electrons from H(2)O, generating O(2) and a proton gradient subsequently used for ATP formation. It consists of a core antenna complex that captures photons, and an electron transfer chain that converts photonic excitation into a charge separation. This chain is Cytochrome b559 subunit alpha, found in Nostoc sp. (strain PCC 7120 / SAG 25.82 / UTEX 2576).